Consider the following 95-residue polypeptide: UPF0473 protein ABC1595 (95 aa).

This sequence belongs to the UPF0473 family.

The protein is UPF0473 protein ABC1595 of Shouchella clausii (strain KSM-K16) (Alkalihalobacillus clausii).